The chain runs to 141 residues: Large ribosomal subunit protein uL11 (141 aa).

The protein belongs to the universal ribosomal protein uL11 family. In terms of assembly, part of the ribosomal stalk of the 50S ribosomal subunit. Interacts with L10 and the large rRNA to form the base of the stalk. L10 forms an elongated spine to which L12 dimers bind in a sequential fashion forming a multimeric L10(L12)X complex. One or more lysine residues are methylated.

Functionally, forms part of the ribosomal stalk which helps the ribosome interact with GTP-bound translation factors. This chain is Large ribosomal subunit protein uL11, found in Nitratiruptor sp. (strain SB155-2).